The chain runs to 93 residues: Large ribosomal subunit protein uL23cz/uL23cy (93 aa).

Belongs to the universal ribosomal protein uL23 family. Part of the 50S ribosomal subunit.

Its subcellular location is the plastid. The protein localises to the chloroplast. In terms of biological role, binds to 23S rRNA. The polypeptide is Large ribosomal subunit protein uL23cz/uL23cy (rpl23-A) (Platanus occidentalis (Sycamore)).